The sequence spans 545 residues: Squalene monooxygenase SE2 (545 aa).

Residues E12–L32 traverse the membrane as a helical segment. FAD-binding positions include V86–A87, E106–R107, R114, R185, V201, D364, and M377. Helical transmembrane passes span L475–P495 and M500–S520.

Belongs to the squalene monooxygenase family. It depends on FAD as a cofactor. Weak expression in petioles and flower buds and barely detectable in roots and leaves. In petioles, preferentially observed in vascular bundle tissue (phloem cells and parenchymatous cells near xylem) and resin ducts.

The protein localises to the membrane. The enzyme catalyses squalene + reduced [NADPH--hemoprotein reductase] + O2 = (S)-2,3-epoxysqualene + oxidized [NADPH--hemoprotein reductase] + H2O + H(+). The protein operates within terpene metabolism; lanosterol biosynthesis; lanosterol from farnesyl diphosphate: step 2/3. Functionally, component of the triterpene saponins (e.g. ginsenosides or panaxosides) and phytosterols biosynthetic pathways. Catalyzes the first oxygenation step in sterol biosynthesis and is suggested to be one of the rate-limiting enzymes in this pathway. This is Squalene monooxygenase SE2 from Panax ginseng (Korean ginseng).